The sequence spans 394 residues: Protein BUR2 (394 aa).

Disordered regions lie at residues 1-32 and 372-394; these read MVLS…GNPQ and MSER…KPRF. Polar residues predominate over residues 9-32; the sequence is IANSQPSGNGKTSLDIKQNEGNPQ. Residues 372–381 show a composition bias toward basic and acidic residues; it reads MSERSIKRPS.

As to quaternary structure, belongs to the BUR kinase complex.

It localises to the nucleus. In terms of biological role, component of the BUR kinase complex involved in transcription regulation. This complex phosphorylates the UBC2/RAD6 ubiquitin-conjugating enzyme (E2), leading to monoubiquitination of histone H2B and the silencing of telomeric-associated genes. Also required for histone H3 methylation. Necessary for the recovery from pheromone-induced growth arrest in the cell cycle G1 phase. The kinase activity of the complex requires the presence of BUR2. Overexpression of BUR2 interferes with mitotic chromosome segregation. This chain is Protein BUR2 (BUR2), found in Kluyveromyces lactis (strain ATCC 8585 / CBS 2359 / DSM 70799 / NBRC 1267 / NRRL Y-1140 / WM37) (Yeast).